A 474-amino-acid chain; its full sequence is Cryptochrome DASH (474 aa).

In terms of domain architecture, Photolyase/cryptochrome alpha/beta spans 2–136 (DTAVVWFRDD…ALRQRWTHTL (135 aa)). Positions 161–171 (EAAATVRDPRS) are enriched in basic and acidic residues. The disordered stretch occupies residues 161–202 (EAAATVRDPRSAPETVPTPDGLTPGPVPTVESLGVSEPPTDD).

This sequence belongs to the DNA photolyase class-1 family. FAD serves as cofactor. It depends on (6R)-5,10-methylene-5,6,7,8-tetrahydrofolate as a cofactor.

Its function is as follows. May have a photoreceptor function. Binds DNA; probably functions as a transcriptional repressor. The sequence is that of Cryptochrome DASH (cry) from Natronomonas pharaonis (strain ATCC 35678 / DSM 2160 / CIP 103997 / JCM 8858 / NBRC 14720 / NCIMB 2260 / Gabara) (Halobacterium pharaonis).